Consider the following 835-residue polypeptide: Phenylalanine--tRNA ligase beta subunit (835 aa).

One can recognise a tRNA-binding domain in the interval 44–158; it reads GPVDGPLTVG…LPGADGADVL (115 aa). In terms of domain architecture, B5 spans 414 to 493; it reads WSLPPIRIAV…RLEGLEVIRS (80 aa). Asp471, Asp477, Glu480, and Glu481 together coordinate Mg(2+). Residues 741 to 834 form the FDX-ACB domain; that stretch reads SPFPAVLQDV…AAERVGATLR (94 aa).

It belongs to the phenylalanyl-tRNA synthetase beta subunit family. Type 1 subfamily. Tetramer of two alpha and two beta subunits. Mg(2+) is required as a cofactor.

The protein localises to the cytoplasm. It carries out the reaction tRNA(Phe) + L-phenylalanine + ATP = L-phenylalanyl-tRNA(Phe) + AMP + diphosphate + H(+). In Mycobacterium leprae (strain TN), this protein is Phenylalanine--tRNA ligase beta subunit.